The sequence spans 298 residues: Probable prolyl 4-hydroxylase 4 (298 aa).

Topologically, residues 1–6 (MARRGL) are cytoplasmic. The chain crosses the membrane as a helical; Signal-anchor for type II membrane protein span at residues 7-25 (LISFFAIFSVLLQSSTSLI). Topologically, residues 26 to 298 (SSSSVFVNPS…GYCRRSCKAC (273 aa)) are lumenal. N77 carries an N-linked (GlcNAc...) asparagine glycan. Residues 120–245 (NGEDIQVLRY…KWSATKWIHV (126 aa)) form the Fe2OG dioxygenase domain. H138 and D140 together coordinate Fe cation. N164 is a glycosylation site (N-linked (GlcNAc...) asparagine). H226 contributes to the Fe cation binding site. K236 provides a ligand contact to 2-oxoglutarate. Residues N257 and N262 are each glycosylated (N-linked (GlcNAc...) asparagine). Residues 258 to 298 (CTDMNESCERWAVLGECTKNPEYMVGTTELPGYCRRSCKAC) enclose the ShKT domain. 3 disulfides stabilise this stretch: C258-C298, C265-C291, and C274-C295.

Belongs to the P4HA family. Fe(2+) serves as cofactor. It depends on L-ascorbate as a cofactor.

The protein localises to the endoplasmic reticulum membrane. It catalyses the reaction L-prolyl-[collagen] + 2-oxoglutarate + O2 = trans-4-hydroxy-L-prolyl-[collagen] + succinate + CO2. Functionally, catalyzes the post-translational formation of 4-hydroxyproline in -Xaa-Pro-Gly- sequences in proline-rich peptide sequences of plant glycoproteins and other proteins. Hydroxyprolines are important constituent of many plant cell wall glycoproteins such as extensins, hydroxyproline-rich glycoproteins, lectins and arabinogalactan proteins. The protein is Probable prolyl 4-hydroxylase 4 of Arabidopsis thaliana (Mouse-ear cress).